A 323-amino-acid chain; its full sequence is Tetraacyldisaccharide 4'-kinase (323 aa).

56-63 (TVGGVGKT) lines the ATP pocket.

This sequence belongs to the LpxK family.

It carries out the reaction a lipid A disaccharide + ATP = a lipid IVA + ADP + H(+). It functions in the pathway glycolipid biosynthesis; lipid IV(A) biosynthesis; lipid IV(A) from (3R)-3-hydroxytetradecanoyl-[acyl-carrier-protein] and UDP-N-acetyl-alpha-D-glucosamine: step 6/6. Functionally, transfers the gamma-phosphate of ATP to the 4'-position of a tetraacyldisaccharide 1-phosphate intermediate (termed DS-1-P) to form tetraacyldisaccharide 1,4'-bis-phosphate (lipid IVA). This is Tetraacyldisaccharide 4'-kinase from Legionella pneumophila (strain Corby).